The chain runs to 353 residues: Pupal cuticle protein PCP52 (353 aa).

An N-terminal signal peptide occupies residues 1–15; the sequence is MRVLILSAFIACATA. Positions 166–195 are disordered; that stretch reads AEAPEGNKDEGNKDSVQVESSATESESDKA. The span at 179-189 shows a compositional bias: polar residues; sequence DSVQVESSATE.

Its function is as follows. Component of the cuticle of the pupa of Galleria mellonella. The protein is Pupal cuticle protein PCP52 (PCP52) of Galleria mellonella (Greater wax moth).